The following is a 334-amino-acid chain: Tryptophan--tRNA ligase (334 aa).

ATP-binding positions include 11-13 (QPS) and 19-20 (GN). The 'HIGH' region signature appears at 12 to 20 (PSGELTIGN). Aspartate 135 is a binding site for L-tryptophan. ATP is bound by residues 147–149 (GED), valine 186, and 195–199 (KMSKS). Positions 195-199 (KMSKS) match the 'KMSKS' region motif.

Belongs to the class-I aminoacyl-tRNA synthetase family. As to quaternary structure, homodimer.

The protein resides in the cytoplasm. It catalyses the reaction tRNA(Trp) + L-tryptophan + ATP = L-tryptophyl-tRNA(Trp) + AMP + diphosphate + H(+). Catalyzes the attachment of tryptophan to tRNA(Trp). The polypeptide is Tryptophan--tRNA ligase (Escherichia coli O157:H7).